A 141-amino-acid polypeptide reads, in one-letter code: Hemoglobin subunit alpha-1/2 (141 aa).

Residues 1–141 (VLSPADKTNV…VSTVLTSKYR (141 aa)) enclose the Globin domain. Position 3 is a phosphoserine (serine 3). Position 7 is an N6-succinyllysine (lysine 7). Threonine 8 is modified (phosphothreonine). An N6-succinyllysine modification is found at lysine 11. Lysine 16 carries the N6-acetyllysine; alternate modification. Lysine 16 is subject to N6-succinyllysine; alternate. Phosphotyrosine is present on tyrosine 24. Lysine 40 is subject to N6-succinyllysine. Serine 49 is subject to Phosphoserine. O2 is bound at residue histidine 58. Residue histidine 87 coordinates heme b. Serine 102 carries the phosphoserine modification. Threonine 108 carries the post-translational modification Phosphothreonine. Position 124 is a phosphoserine (serine 124). Threonine 134 and threonine 137 each carry phosphothreonine. Phosphoserine is present on serine 138.

It belongs to the globin family. Heterotetramer of two alpha chains and two beta chains. As to expression, red blood cells.

In terms of biological role, involved in oxygen transport from the lung to the various peripheral tissues. In Leptonychotes weddellii (Weddell seal), this protein is Hemoglobin subunit alpha-1/2.